We begin with the raw amino-acid sequence, 602 residues long: Elongation factor 4 (602 aa).

The tr-type G domain maps to 7-189 (SKIRNFCIIA…AIVRRVPAPQ (183 aa)). GTP contacts are provided by residues 19–24 (DHGKST) and 136–139 (NKVD).

Belongs to the TRAFAC class translation factor GTPase superfamily. Classic translation factor GTPase family. LepA subfamily.

It is found in the cell inner membrane. It carries out the reaction GTP + H2O = GDP + phosphate + H(+). In terms of biological role, required for accurate and efficient protein synthesis under certain stress conditions. May act as a fidelity factor of the translation reaction, by catalyzing a one-codon backward translocation of tRNAs on improperly translocated ribosomes. Back-translocation proceeds from a post-translocation (POST) complex to a pre-translocation (PRE) complex, thus giving elongation factor G a second chance to translocate the tRNAs correctly. Binds to ribosomes in a GTP-dependent manner. This Prochlorococcus marinus (strain MIT 9312) protein is Elongation factor 4.